The primary structure comprises 318 residues: Pantothenate kinase (318 aa).

ATP is bound at residue G96–S103.

It belongs to the prokaryotic pantothenate kinase family.

It localises to the cytoplasm. It catalyses the reaction (R)-pantothenate + ATP = (R)-4'-phosphopantothenate + ADP + H(+). The protein operates within cofactor biosynthesis; coenzyme A biosynthesis; CoA from (R)-pantothenate: step 1/5. The protein is Pantothenate kinase of Rhodopseudomonas palustris (strain HaA2).